We begin with the raw amino-acid sequence, 209 residues long: MGQKVHPRGFRLGLSADWQAKWFNEKNYKEWLLEDEEIRKIIKNKYYHAGISEIYVERPDAERINITVKTARPGIIIGRKGSEITSLREELERKFNRRVVINIEEIKTPELDAQLVAESIASRIEKRASYKVAMKRAIMNAMRKGAQGIKVMVAGRLGGAEIARREWYLRGRLPLQKIKAIIDYGTATAWTKYGTIGIKVWIYKGDADI.

In terms of domain architecture, KH type-2 spans 38-107 (IRKIIKNKYY…RVVINIEEIK (70 aa)).

Belongs to the universal ribosomal protein uS3 family. In terms of assembly, part of the 30S ribosomal subunit. Forms a tight complex with proteins S10 and S14.

Its function is as follows. Binds the lower part of the 30S subunit head. Binds mRNA in the 70S ribosome, positioning it for translation. In Thermotoga maritima (strain ATCC 43589 / DSM 3109 / JCM 10099 / NBRC 100826 / MSB8), this protein is Small ribosomal subunit protein uS3.